A 66-amino-acid polypeptide reads, in one-letter code: UPF0337 protein pc0632 (66 aa).

This sequence belongs to the UPF0337 (CsbD) family.

This is UPF0337 protein pc0632 from Protochlamydia amoebophila (strain UWE25).